Here is a 132-residue protein sequence, read N- to C-terminus: CDGSH iron-sulfur domain-containing protein 2 homolog (132 aa).

Residues 1-35 lie on the Lumenal side of the membrane; the sequence is MEPISHLVKSSLPNYLSSLPVPDSLGGWFKLSFKD. Residues 36–58 traverse the membrane as a helical segment; that stretch reads WLALIPPTAVLAGLGYTAYLAFC. Residues 59-132 lie on the Cytoplasmic side of the membrane; the sequence is PAAQCSAKSA…VGPVVVSKKK (74 aa). Residues C97, C99, C108, and H112 each contribute to the [2Fe-2S] cluster site.

Belongs to the CISD protein family. CISD2 subfamily. The cofactor is [2Fe-2S] cluster.

It localises to the endoplasmic reticulum membrane. The protein is CDGSH iron-sulfur domain-containing protein 2 homolog of Drosophila grimshawi (Hawaiian fruit fly).